A 386-amino-acid chain; its full sequence is Eukaryotic translation initiation factor 3 subunit M (386 aa).

Residues 181–343 form the PCI domain; sequence NSELASKVMI…RKVHISSTMH (163 aa).

It belongs to the eIF-3 subunit M family. In terms of assembly, component of the eukaryotic translation initiation factor 3 (eIF-3) complex.

It localises to the cytoplasm. Its function is as follows. Component of the eukaryotic translation initiation factor 3 (eIF-3) complex, which is involved in protein synthesis of a specialized repertoire of mRNAs and, together with other initiation factors, stimulates binding of mRNA and methionyl-tRNAi to the 40S ribosome. The eIF-3 complex specifically targets and initiates translation of a subset of mRNAs involved in cell proliferation. The protein is Eukaryotic translation initiation factor 3 subunit M of Aedes aegypti (Yellowfever mosquito).